The sequence spans 103 residues: Pyrimidine/purine nucleoside phosphorylase (103 aa).

The protein belongs to the nucleoside phosphorylase PpnP family.

The enzyme catalyses a purine D-ribonucleoside + phosphate = a purine nucleobase + alpha-D-ribose 1-phosphate. The catalysed reaction is adenosine + phosphate = alpha-D-ribose 1-phosphate + adenine. It catalyses the reaction cytidine + phosphate = cytosine + alpha-D-ribose 1-phosphate. It carries out the reaction guanosine + phosphate = alpha-D-ribose 1-phosphate + guanine. The enzyme catalyses inosine + phosphate = alpha-D-ribose 1-phosphate + hypoxanthine. The catalysed reaction is thymidine + phosphate = 2-deoxy-alpha-D-ribose 1-phosphate + thymine. It catalyses the reaction uridine + phosphate = alpha-D-ribose 1-phosphate + uracil. It carries out the reaction xanthosine + phosphate = alpha-D-ribose 1-phosphate + xanthine. In terms of biological role, catalyzes the phosphorolysis of diverse nucleosides, yielding D-ribose 1-phosphate and the respective free bases. Can use uridine, adenosine, guanosine, cytidine, thymidine, inosine and xanthosine as substrates. Also catalyzes the reverse reactions. This is Pyrimidine/purine nucleoside phosphorylase from Sulfurovum sp. (strain NBC37-1).